The chain runs to 296 residues: GTPase Era (296 aa).

One can recognise an Era-type G domain in the interval 7 to 174; sequence RAGFVAIVGR…LDEIAAGLPQ (168 aa). Positions 15-22 are G1; that stretch reads GRPNVGKS. 15-22 serves as a coordination point for GTP; sequence GRPNVGKS. The interval 41 to 45 is G2; sequence QTTRH. The tract at residues 62–65 is G3; it reads DTPG. GTP-binding positions include 62-66 and 123-126; these read DTPGF and SKID. The interval 123 to 126 is G4; sequence SKID. A G5 region spans residues 153–155; it reads VSA. Residues 205–281 form the KH type-2 domain; sequence VGDELPYGCT…HLEIYIKVRK (77 aa).

Belongs to the TRAFAC class TrmE-Era-EngA-EngB-Septin-like GTPase superfamily. Era GTPase family. In terms of assembly, monomer.

Its subcellular location is the cytoplasm. The protein resides in the cell inner membrane. An essential GTPase that binds both GDP and GTP, with rapid nucleotide exchange. Plays a role in 16S rRNA processing and 30S ribosomal subunit biogenesis and possibly also in cell cycle regulation and energy metabolism. This is GTPase Era from Bordetella parapertussis (strain 12822 / ATCC BAA-587 / NCTC 13253).